Here is a 110-residue protein sequence, read N- to C-terminus: uncharacterized protein (110 aa).

A signal peptide spans 1–23 (MKRITINIITMFIAAAVISLTGT).

This is an uncharacterized protein from Bacillus subtilis (strain 168).